The primary structure comprises 156 residues: Ribosomal RNA large subunit methyltransferase H (156 aa).

S-adenosyl-L-methionine-binding positions include Leu-73, Gly-104, and 123–128; that span reads LSSLTL.

It belongs to the RNA methyltransferase RlmH family. Homodimer.

The protein localises to the cytoplasm. The catalysed reaction is pseudouridine(1915) in 23S rRNA + S-adenosyl-L-methionine = N(3)-methylpseudouridine(1915) in 23S rRNA + S-adenosyl-L-homocysteine + H(+). In terms of biological role, specifically methylates the pseudouridine at position 1915 (m3Psi1915) in 23S rRNA. The sequence is that of Ribosomal RNA large subunit methyltransferase H from Bordetella bronchiseptica (strain ATCC BAA-588 / NCTC 13252 / RB50) (Alcaligenes bronchisepticus).